We begin with the raw amino-acid sequence, 67 residues long: MSLLPVMVIFGLSFPPVFFELLVPLALFFLLRRLLQPTGIYDFVWHPALFNTALYCCLFYLISCLFV.

2 consecutive transmembrane segments (helical) span residues 9-29 and 47-67; these read IFGLSFPPVFFELLVPLALFF and PALFNTALYCCLFYLISCLFV.

It belongs to the AaeX family.

The protein localises to the cell membrane. This Serratia marcescens protein is Protein AaeX.